Consider the following 449-residue polypeptide: DNA-directed RNA polymerase subunit Rpo1C (449 aa).

Positions 1 to 68 (MQDVIKKIED…EGEELLKAVE (68 aa)) are unknown. The tract at residues 69-449 (DEYLRILKVR…TGSVSVIMKK (381 aa)) is DNA-directed RNA polymerase subunit Rpo1C.

The protein belongs to the RNA polymerase beta' chain family. Part of the RNA polymerase complex.

It localises to the cytoplasm. It catalyses the reaction RNA(n) + a ribonucleoside 5'-triphosphate = RNA(n+1) + diphosphate. DNA-dependent RNA polymerase (RNAP) catalyzes the transcription of DNA into RNA using the four ribonucleoside triphosphates as substrates. Forms part of the jaw domain. This is DNA-directed RNA polymerase subunit Rpo1C from Methanothermobacter thermautotrophicus (strain Winter) (Methanobacterium thermoautotrophicum).